The following is a 55-amino-acid chain: Mitochondrial import receptor subunit TOM7 homolog (55 aa).

At 1–20 (MVKLSKEAKQRLQQLFKGGQ) the chain is on the cytoplasmic side. Residues 21–36 (FAIRWGFIPLVIYLGF) form a helical membrane-spanning segment. The Mitochondrial intermembrane segment spans residues 37 to 55 (KRGADPGMPEPTVLSLLWG).

Belongs to the Tom7 family. As to quaternary structure, forms part of the preprotein translocase complex of the outer mitochondrial membrane (TOM complex) which consists of at least 7 different proteins (TOMM5, TOMM6, TOMM7, TOMM20, TOMM22, TOMM40 and TOMM70).

It is found in the mitochondrion outer membrane. Functionally, required for assembly and stability of the TOM complex. Positive regulator of PRKN translocation to damaged mitochondria. Acts probably by stabilizing PINK1 on the outer membrane of depolarized mitochondria. The sequence is that of Mitochondrial import receptor subunit TOM7 homolog (TOMM7) from Bos taurus (Bovine).